A 73-amino-acid chain; its full sequence is Methionyl-tRNA formyltransferase (73 aa).

The protein belongs to the Fmt family.

The catalysed reaction is L-methionyl-tRNA(fMet) + (6R)-10-formyltetrahydrofolate = N-formyl-L-methionyl-tRNA(fMet) + (6S)-5,6,7,8-tetrahydrofolate + H(+). Attaches a formyl group to the free amino group of methionyl-tRNA(fMet). The formyl group appears to play a dual role in the initiator identity of N-formylmethionyl-tRNA by promoting its recognition by IF2 and preventing the misappropriation of this tRNA by the elongation apparatus. The polypeptide is Methionyl-tRNA formyltransferase (fmt) (Rickettsia rhipicephali).